Reading from the N-terminus, the 715-residue chain is Fatty acid oxidation complex subunit alpha (715 aa).

The tract at residues 1–190 is enoyl-CoA hydratase/isomerase; that stretch reads MIYEGKAITV…KVGAVDAVVA (190 aa). D297 contacts substrate. Residues 312-715 form a 3-hydroxyacyl-CoA dehydrogenase region; the sequence is HDVKQAAVLG…MAKNGQRFFN (404 aa). NAD(+) is bound by residues M325, D344, 401–403, K408, and S430; that span reads VVE. The active-site For 3-hydroxyacyl-CoA dehydrogenase activity is the H451. Residue N454 participates in NAD(+) binding. Substrate-binding residues include N501 and Y660.

The protein in the N-terminal section; belongs to the enoyl-CoA hydratase/isomerase family. In the C-terminal section; belongs to the 3-hydroxyacyl-CoA dehydrogenase family. As to quaternary structure, heterotetramer of two alpha chains (FadB) and two beta chains (FadA).

It carries out the reaction a (3S)-3-hydroxyacyl-CoA + NAD(+) = a 3-oxoacyl-CoA + NADH + H(+). The enzyme catalyses a (3S)-3-hydroxyacyl-CoA = a (2E)-enoyl-CoA + H2O. The catalysed reaction is a 4-saturated-(3S)-3-hydroxyacyl-CoA = a (3E)-enoyl-CoA + H2O. It catalyses the reaction (3S)-3-hydroxybutanoyl-CoA = (3R)-3-hydroxybutanoyl-CoA. It carries out the reaction a (3Z)-enoyl-CoA = a 4-saturated (2E)-enoyl-CoA. The enzyme catalyses a (3E)-enoyl-CoA = a 4-saturated (2E)-enoyl-CoA. The protein operates within lipid metabolism; fatty acid beta-oxidation. Involved in the aerobic and anaerobic degradation of long-chain fatty acids via beta-oxidation cycle. Catalyzes the formation of 3-oxoacyl-CoA from enoyl-CoA via L-3-hydroxyacyl-CoA. It can also use D-3-hydroxyacyl-CoA and cis-3-enoyl-CoA as substrate. The polypeptide is Fatty acid oxidation complex subunit alpha (Pseudomonas putida (Arthrobacter siderocapsulatus)).